The primary structure comprises 339 residues: MSTAVINADDDAMEPTLQSILDQRSLRWIFVGGKGGVGKTTTSCSLAIQLAKVRRSVLLISTDPAHNLSDAFSQKFGKDARKVDGFENLFAMEIDPNGSMQDLLAGQAEGEGAEGLGGMGGMMQDLALSIPGIDEAMSFAEVLKQVKSLSYETIIFDTAPTGHTLRFLQFPSVLEKALKKISQLSSQFGGVLNGLLGANGALPNGQNLGEMMEKLEALRATISEVNQQFKDERLTTFVCVCIPEFLSLYETERMIQELASYQIDTHCIVVNQLLFPKPGSDCEQCTARRRMQKKYLDQIEELYDEFNVVKMPLLVEEVRGKEKLEKFSEMLVKPFVPPS.

K34–T41 is a binding site for ATP. The active site involves D63. The ATP site is built by E244 and N271. Zn(2+) contacts are provided by C282 and C285.

The protein belongs to the arsA ATPase family. Homodimer.

The protein localises to the cytoplasm. The protein resides in the endoplasmic reticulum. Functionally, ATPase required for the post-translational delivery of tail-anchored (TA) proteins to the endoplasmic reticulum. Recognizes and selectively binds the transmembrane domain of TA proteins in the cytosol. This complex then targets to the endoplasmic reticulum by membrane-bound receptors, where the tail-anchored protein is released for insertion. This process is regulated by ATP binding and hydrolysis. ATP binding drives the homodimer towards the closed dimer state, facilitating recognition of newly synthesized TA membrane proteins. ATP hydrolysis is required for insertion. Subsequently, the homodimer reverts towards the open dimer state, lowering its affinity for the membrane-bound receptor, and returning it to the cytosol to initiate a new round of targeting. This is ATPase GET3 from Podospora anserina (strain S / ATCC MYA-4624 / DSM 980 / FGSC 10383) (Pleurage anserina).